A 156-amino-acid polypeptide reads, in one-letter code: Protein-export protein SecB (156 aa).

The protein belongs to the SecB family. In terms of assembly, homotetramer, a dimer of dimers. One homotetramer interacts with 1 SecA dimer.

The protein resides in the cytoplasm. Its function is as follows. One of the proteins required for the normal export of preproteins out of the cell cytoplasm. It is a molecular chaperone that binds to a subset of precursor proteins, maintaining them in a translocation-competent state. It also specifically binds to its receptor SecA. The sequence is that of Protein-export protein SecB from Paraburkholderia xenovorans (strain LB400).